The primary structure comprises 396 residues: MSFDLRTRLDARRAEHLYRQRPLLQSPQGPQVVVDGQPLLAFCNNDYMGLANHPEVIAAWQAGAERWGVGGGASHLVIGHSTPHHELEEALAELTGRPRALLFSNGYMANLGAVTALVGQGDTVLEDRLNHASLLDAGLLSGARFSRYLHNDVTSLASHLEKSVGDTLVVTDGVFSMDGDIADLPALAQAAKAKGAWLMVDDAHGFGPLGANGAGIVEHFGLSMEDVPVLVGTLGKSFGTSGAFVAGSEELIETLIQFARPYIYTTSQPPALACATLKSLQLLRTEHWRREHLASLIQQFRQGAEQIGLQLMDSFTPIQPILIGDAGRALRLSQLLRERGLLVTAIRPPTVPAGSARLRVTLSAAHSKADVQLLLEALEQCYPLLDASESTEPVHA.

R19 contributes to the substrate binding site. Residue 106–107 (GY) participates in pyridoxal 5'-phosphate binding. H131 is a substrate binding site. Residues S176, H204, and T233 each coordinate pyridoxal 5'-phosphate. K236 bears the N6-(pyridoxal phosphate)lysine mark. T350 provides a ligand contact to substrate.

Belongs to the class-II pyridoxal-phosphate-dependent aminotransferase family. BioF subfamily. In terms of assembly, homodimer. It depends on pyridoxal 5'-phosphate as a cofactor.

It catalyses the reaction 6-carboxyhexanoyl-[ACP] + L-alanine + H(+) = (8S)-8-amino-7-oxononanoate + holo-[ACP] + CO2. Its pathway is cofactor biosynthesis; biotin biosynthesis. Catalyzes the decarboxylative condensation of pimeloyl-[acyl-carrier protein] and L-alanine to produce 8-amino-7-oxononanoate (AON), [acyl-carrier protein], and carbon dioxide. The polypeptide is 8-amino-7-oxononanoate synthase (Pseudomonas savastanoi pv. phaseolicola (strain 1448A / Race 6) (Pseudomonas syringae pv. phaseolicola (strain 1448A / Race 6))).